The sequence spans 129 residues: Large ribosomal subunit protein bL20 (129 aa).

Belongs to the bacterial ribosomal protein bL20 family.

In terms of biological role, binds directly to 23S ribosomal RNA and is necessary for the in vitro assembly process of the 50S ribosomal subunit. It is not involved in the protein synthesizing functions of that subunit. The protein is Large ribosomal subunit protein bL20 of Mycobacterium leprae (strain Br4923).